The chain runs to 67 residues: Conotoxin Cal12.1p2 (67 aa).

The propeptide occupies D1–L21.

Post-translationally, contains 4 disulfide bonds. As to expression, expressed by the venom duct.

The protein localises to the secreted. In Californiconus californicus (California cone), this protein is Conotoxin Cal12.1p2.